Here is a 470-residue protein sequence, read N- to C-terminus: Low molecular weight neuronal intermediate filament (470 aa).

Positions 1–91 are head; sequence MTSRELYTSS…KIVRTNEKEQ (91 aa). An IF rod domain is found at 88-399; the sequence is EKEQLQGLND…KLLEGEETRL (312 aa). The coil 1A stretch occupies residues 91-123; sequence QLQGLNDRFVTYIEKVHHLEQQNKLLESEVTLL. A linker 1 region spans residues 121 to 136; sequence TLLRQKHSEPSRLSHI. The segment at 137–232 is coil 1B; the sequence is YEQEIRELRS…KVHEEEIAEL (96 aa). The segment at 233–251 is linker 12; that stretch reads QASVQEAQISVEMDVVSKP. The coil 2A stretch occupies residues 252–270; that stretch reads DLTAALKEIRMQYEVLSAR. A linker 2 region spans residues 271–279; that stretch reads NQQSSEEWY. The segment at 280–395 is coil 2B; it reads QAKIANVSLE…AAYRKLLEGE (116 aa). The tract at residues 396 to 470 is tail; sequence ETRLTSVGGG…EKISQKAAAN (75 aa). The segment covering 414–431 has biased composition (low complexity); it reads FSSGSYSGGRSSTTSTIS. Residues 414–470 are disordered; it reads FSSGSYSGGRSSTTSTISIRKEEKKESPEGGKGGSSGQPKTSKPGDQEKISQKAAAN. The span at 432–442 shows a compositional bias: basic and acidic residues; it reads IRKEEKKESPE.

The protein belongs to the intermediate filament family. In terms of tissue distribution, nervous system; in axons in the PNS and in small perikarya in the dorsal root ganglion.

This Xenopus laevis (African clawed frog) protein is Low molecular weight neuronal intermediate filament.